Here is a 314-residue protein sequence, read N- to C-terminus: Aspartate carbamoyltransferase catalytic subunit (314 aa).

Positions 55 and 56 each coordinate carbamoyl phosphate. Position 83 (K83) interacts with L-aspartate. Positions 105, 139, and 142 each coordinate carbamoyl phosphate. Positions 172 and 226 each coordinate L-aspartate. Carbamoyl phosphate contacts are provided by G267 and P268.

This sequence belongs to the aspartate/ornithine carbamoyltransferase superfamily. ATCase family. In terms of assembly, heterododecamer (2C3:3R2) of six catalytic PyrB chains organized as two trimers (C3), and six regulatory PyrI chains organized as three dimers (R2).

It catalyses the reaction carbamoyl phosphate + L-aspartate = N-carbamoyl-L-aspartate + phosphate + H(+). The protein operates within pyrimidine metabolism; UMP biosynthesis via de novo pathway; (S)-dihydroorotate from bicarbonate: step 2/3. Its function is as follows. Catalyzes the condensation of carbamoyl phosphate and aspartate to form carbamoyl aspartate and inorganic phosphate, the committed step in the de novo pyrimidine nucleotide biosynthesis pathway. In Rhodococcus jostii (strain RHA1), this protein is Aspartate carbamoyltransferase catalytic subunit.